Here is a 298-residue protein sequence, read N- to C-terminus: Protoheme IX farnesyltransferase (298 aa).

Helical transmembrane passes span V16–P36, A45–L65, V93–I113, T114–K134, I141–G161, S172–F192, V223–L243, G244–P264, and I277–V297.

This sequence belongs to the UbiA prenyltransferase family. Protoheme IX farnesyltransferase subfamily.

It is found in the cell inner membrane. The catalysed reaction is heme b + (2E,6E)-farnesyl diphosphate + H2O = Fe(II)-heme o + diphosphate. It functions in the pathway porphyrin-containing compound metabolism; heme O biosynthesis; heme O from protoheme: step 1/1. Functionally, converts heme B (protoheme IX) to heme O by substitution of the vinyl group on carbon 2 of heme B porphyrin ring with a hydroxyethyl farnesyl side group. This is Protoheme IX farnesyltransferase from Xanthomonas oryzae pv. oryzae (strain MAFF 311018).